The chain runs to 457 residues: Transcription termination factor Rho (457 aa).

Residues M1–D23 are disordered. The region spanning L77–D152 is the Rho RNA-BD domain. ATP is bound by residues G200–A205, R212–V217, and R243.

This sequence belongs to the Rho family. In terms of assembly, homohexamer. The homohexamer assembles into an open ring structure.

Facilitates transcription termination by a mechanism that involves Rho binding to the nascent RNA, activation of Rho's RNA-dependent ATPase activity, and release of the mRNA from the DNA template. This is Transcription termination factor Rho from Rickettsia prowazekii (strain Madrid E).